The sequence spans 364 residues: MNRATATINVTALKHNLSQIKALAPKSLAWAMIKSNGYGHGLVRVAKALSDANAFGVACIDEALTLREVGIKSPIIVMKGFYNEAELSQFARHRLGAVIHCSDQVSLLEKTNLTSSLSVWLKIDTGMNRLGFSVEQSPAVYNQLKTSSSIQKPIGLMTHLADADNENKTFTELQIKRFFSVTEKMIGPKSIVNSAGFFAYPNALVDLIRPGIILYGISPFGINYNSFKEKIEKKFRPVMTLSAKIIAIKNRRQNDSVGYGCTWSCPEDMPIAIVSIGYGDGYPRHAPSGTPVLLNGKICPLIGRVSMDMIAIDLRSQPNAQVGDDVILWGEGLPVEIIAEKAGTIAYELLCKITQRVQFIEIEK.

K34 serves as the catalytic Proton acceptor; specific for D-alanine. K34 carries the N6-(pyridoxal phosphate)lysine modification. R129 contacts substrate. Y259 functions as the Proton acceptor; specific for L-alanine in the catalytic mechanism. Position 307 (M307) interacts with substrate.

The protein belongs to the alanine racemase family. It depends on pyridoxal 5'-phosphate as a cofactor.

The enzyme catalyses L-alanine = D-alanine. Its pathway is amino-acid biosynthesis; D-alanine biosynthesis; D-alanine from L-alanine: step 1/1. Functionally, catalyzes the interconversion of L-alanine and D-alanine. May also act on other amino acids. This is Alanine racemase (alr) from Coxiella burnetii (strain CbuK_Q154) (Coxiella burnetii (strain Q154)).